We begin with the raw amino-acid sequence, 241 residues long: ATP synthase subunit 4, mitochondrial (241 aa).

The transit peptide at Met1 to Tyr35 directs the protein to the mitochondrion.

The protein belongs to the eukaryotic ATPase B chain family. As to quaternary structure, F-type ATPases have 2 components, CF(1) - the catalytic core - and CF(0) - the membrane proton channel. In yeast, the dimeric form of ATP synthase consists of 17 polypeptides: alpha, beta, gamma, delta, epsilon, 4 (B), 5 (OSCP), 6 (A), 8, 9 (C), d, E (Tim11), f, g, h, i/j and k.

The protein resides in the mitochondrion. Its subcellular location is the mitochondrion inner membrane. In terms of biological role, mitochondrial membrane ATP synthase (F(1)F(0) ATP synthase or Complex V) produces ATP from ADP in the presence of a proton gradient across the membrane which is generated by electron transport complexes of the respiratory chain. F-type ATPases consist of two structural domains, F(1) - containing the extramembraneous catalytic core, and F(0) - containing the membrane proton channel, linked together by a central stalk and a peripheral stalk. During catalysis, ATP synthesis in the catalytic domain of F(1) is coupled via a rotary mechanism of the central stalk subunits to proton translocation. Part of the complex F(0) domain and the peripheric stalk, which acts as a stator to hold the catalytic alpha(3)beta(3) subcomplex and subunit a/atp6 static relative to the rotary elements. This chain is ATP synthase subunit 4, mitochondrial (atp-3), found in Neurospora crassa (strain ATCC 24698 / 74-OR23-1A / CBS 708.71 / DSM 1257 / FGSC 987).